A 525-amino-acid chain; its full sequence is GMP synthase [glutamine-hydrolyzing] (525 aa).

In terms of domain architecture, Glutamine amidotransferase type-1 spans 8–207 (KILILDFGSQ…ALDICGCAAN (200 aa)). C85 functions as the Nucleophile in the catalytic mechanism. Catalysis depends on residues H181 and E183. The GMPS ATP-PPase domain occupies 208 to 400 (WKPSSIIEDA…LGLPYNMLYR (193 aa)). 235 to 241 (SGGVDSS) serves as a coordination point for ATP.

In terms of assembly, homodimer.

The enzyme catalyses XMP + L-glutamine + ATP + H2O = GMP + L-glutamate + AMP + diphosphate + 2 H(+). It participates in purine metabolism; GMP biosynthesis; GMP from XMP (L-Gln route): step 1/1. Functionally, catalyzes the synthesis of GMP from XMP. The polypeptide is GMP synthase [glutamine-hydrolyzing] (Shewanella sp. (strain ANA-3)).